The following is a 560-amino-acid chain: MAAARLLPVPAGPQPLSFQAKLTFEDVAVLLSQDEWDRLCPAQRGLYRNVMMETYGNVVSLGLPGSKPDIISQLERGEDPWVLDRKGAKKSQGLWSDYSDNLKYDHTTACTQQDSLSCPWECETKGESQNTDLSPKPLISEQTVILGKTPLGRIDQENNETKQSFCLSPNSVDHREVQVLSQSMPLTPHQAVPSGERPYMCVECGKCFGRSSHLLQHQRIHTGEKPYVCSVCGKAFSQSSVLSKHRRIHTGEKPYECNECGKAFRVSSDLAQHHKIHTGEKPHECLECRKAFTQLSHLIQHQRIHTGERPYVCPLCGKAFNHSTVLRSHQRVHTGEKPHRCNECGKTFSVKRTLLQHQRIHTGEKPYTCSECGKAFSDRSVLIQHHNVHTGEKPYECSECGKTFSHRSTLMNHERIHTEEKPYACYECGKAFVQHSHLIQHQRVHTGEKPYVCGECGHAFSARRSLIQHERIHTGEKPFQCTECGKAFSLKATLIVHLRTHTGEKPYECNSCGKAFSQYSVLIQHQRIHTGEKPYECGECGRAFNQHGHLIQHQKVHRKL.

Residues 22–93 (LTFEDVAVLL…DRKGAKKSQG (72 aa)) form the KRAB domain. Glycyl lysine isopeptide (Lys-Gly) (interchain with G-Cter in SUMO2) cross-links involve residues Lys125, Lys136, Lys148, and Lys162. The C2H2-type 1 zinc-finger motif lies at 199–221 (YMCVECGKCFGRSSHLLQHQRIH). Lys225 is covalently cross-linked (Glycyl lysine isopeptide (Lys-Gly) (interchain with G-Cter in SUMO2)). 7 C2H2-type zinc fingers span residues 227–249 (YVCS…RRIH), 255–277 (YECN…HKIH), 283–305 (HECL…QRIH), 311–333 (YVCP…QRVH), 339–361 (HRCN…QRIH), 367–389 (YTCS…HNVH), and 395–417 (YECS…ERIH). Residue Lys421 forms a Glycyl lysine isopeptide (Lys-Gly) (interchain with G-Cter in SUMO2) linkage. 5 C2H2-type zinc fingers span residues 423-445 (YACY…QRVH), 451-473 (YVCG…ERIH), 479-501 (FQCT…LRTH), 507-529 (YECN…QRIH), and 535-557 (YECG…QKVH).

The protein belongs to the krueppel C2H2-type zinc-finger protein family.

It localises to the nucleus. May be involved in transcriptional regulation. The chain is Zinc finger protein 250 (ZNF250) from Homo sapiens (Human).